Consider the following 1215-residue polypeptide: Kinesin-like protein KIN-7I (1215 aa).

One can recognise a Kinesin motor domain in the interval 3–327 (RIHVAVRARP…LQFASRALRV (325 aa)). 79-86 (GQTNSGKT) is a binding site for ATP. 4 coiled-coil regions span residues 333-414 (VNEI…IENL), 571-646 (ESEA…AAYE), 708-855 (IRDY…KRDS), and 894-979 (DMEA…KEDM).

Belongs to the TRAFAC class myosin-kinesin ATPase superfamily. Kinesin family. KIN-7 subfamily.

This chain is Kinesin-like protein KIN-7I, found in Oryza sativa subsp. japonica (Rice).